The chain runs to 689 residues: Armadillo-like helical domain-containing protein 3 (689 aa).

The chain crosses the membrane as a helical span at residues 520 to 538 (IFTLALMIVNLFNMFITYG).

Belongs to the ARMH3 family. In terms of assembly, interacts with PI4KB. Interacts with GBF1.

The protein resides in the golgi apparatus membrane. The protein localises to the cytoplasm. In terms of biological role, involved in GBF1 recruitment, Golgi maintenance and protein secretion. The polypeptide is Armadillo-like helical domain-containing protein 3 (Homo sapiens (Human)).